The following is a 415-amino-acid chain: Histidine--tRNA ligase (415 aa).

It belongs to the class-II aminoacyl-tRNA synthetase family. Homodimer.

The protein resides in the cytoplasm. The catalysed reaction is tRNA(His) + L-histidine + ATP = L-histidyl-tRNA(His) + AMP + diphosphate + H(+). The polypeptide is Histidine--tRNA ligase (Clostridium perfringens (strain SM101 / Type A)).